A 322-amino-acid chain; its full sequence is 4-hydroxy-3-methylbut-2-enyl diphosphate reductase (322 aa).

Cysteine 12 is a [4Fe-4S] cluster binding site. (2E)-4-hydroxy-3-methylbut-2-enyl diphosphate-binding residues include histidine 43 and histidine 81. Positions 43 and 81 each coordinate dimethylallyl diphosphate. Positions 43 and 81 each coordinate isopentenyl diphosphate. Cysteine 103 contacts [4Fe-4S] cluster. Histidine 131 is a (2E)-4-hydroxy-3-methylbut-2-enyl diphosphate binding site. Position 131 (histidine 131) interacts with dimethylallyl diphosphate. Histidine 131 contributes to the isopentenyl diphosphate binding site. The Proton donor role is filled by glutamate 133. Threonine 172 contacts (2E)-4-hydroxy-3-methylbut-2-enyl diphosphate. Cysteine 200 contributes to the [4Fe-4S] cluster binding site. (2E)-4-hydroxy-3-methylbut-2-enyl diphosphate is bound by residues serine 228, asparagine 230, and serine 273. Dimethylallyl diphosphate is bound by residues serine 228, asparagine 230, and serine 273. Isopentenyl diphosphate is bound by residues serine 228, asparagine 230, and serine 273.

Belongs to the IspH family. Requires [4Fe-4S] cluster as cofactor.

The enzyme catalyses isopentenyl diphosphate + 2 oxidized [2Fe-2S]-[ferredoxin] + H2O = (2E)-4-hydroxy-3-methylbut-2-enyl diphosphate + 2 reduced [2Fe-2S]-[ferredoxin] + 2 H(+). The catalysed reaction is dimethylallyl diphosphate + 2 oxidized [2Fe-2S]-[ferredoxin] + H2O = (2E)-4-hydroxy-3-methylbut-2-enyl diphosphate + 2 reduced [2Fe-2S]-[ferredoxin] + 2 H(+). Its pathway is isoprenoid biosynthesis; dimethylallyl diphosphate biosynthesis; dimethylallyl diphosphate from (2E)-4-hydroxy-3-methylbutenyl diphosphate: step 1/1. It participates in isoprenoid biosynthesis; isopentenyl diphosphate biosynthesis via DXP pathway; isopentenyl diphosphate from 1-deoxy-D-xylulose 5-phosphate: step 6/6. Catalyzes the conversion of 1-hydroxy-2-methyl-2-(E)-butenyl 4-diphosphate (HMBPP) into a mixture of isopentenyl diphosphate (IPP) and dimethylallyl diphosphate (DMAPP). Acts in the terminal step of the DOXP/MEP pathway for isoprenoid precursor biosynthesis. The chain is 4-hydroxy-3-methylbut-2-enyl diphosphate reductase from Macrococcus caseolyticus (strain JCSC5402) (Macrococcoides caseolyticum).